Here is a 607-residue protein sequence, read N- to C-terminus: Palmitoyltransferase erf2 (607 aa).

Disordered regions lie at residues 1 to 198 (MSSA…SAKL) and 217 to 272 (ANHN…HHAP). The Cytoplasmic segment spans residues 1–305 (MSSAPETSDA…FQNSRDKPIN (305 aa)). Low complexity predominate over residues 53–66 (SSRPPQSQRSLSRR). Polar residues-rich tracts occupy residues 73–102 (SSITAHSQMTSRPGSSASRLSRSHIPSLTA), 125–156 (ETATPSEDWNDQLDQNRQSIISNGTFPQSSAP), 176–192 (RNTSNASPFGNTTSRSV), and 227–242 (SQRSPLSFLSLQNGNT). A compositionally biased stretch (basic and acidic residues) spans 245–256 (EPRDNRAHERLS). A compositionally biased stretch (polar residues) spans 257–272 (SADSSPGSIQKQHHAP). A helical transmembrane segment spans residues 306-326 (IATGIFVVLPSALFFAYSAPW). Over 327-330 (LWHH) the chain is Lumenal. The helical transmembrane segment at 331 to 351 (ISPAVPILFAYLFYICFSSFI) threads the bilayer. Topologically, residues 352–449 (HASVVDPGII…NCVGRRNYRY (98 aa)) are cytoplasmic. Residues 405 to 455 (KYCKTCNIWRPPRCYHCRVCDNCVETLDHHCVWLNNCVGRRNYRYFFAFVS) enclose the DHHC domain. Residue Cys-435 is the S-palmitoyl cysteine intermediate of the active site. The helical transmembrane segment at 450–470 (FFAFVSSATLLALFLLGASLA) threads the bilayer. The Lumenal portion of the chain corresponds to 471–497 (HVLVYRAREGVSFGSAIDKWRVPWAMV). A helical transmembrane segment spans residues 498–518 (IYGALAAPYPASLWAYHLFLI). At 519–607 (GRGETTREYL…QHVPPTPRQG (89 aa)) the chain is on the cytoplasmic side. Residues 570–607 (YQEGDQRLSAMKRKDRPRDVEAQADIEMQHVPPTPRQG) form a disordered region.

Belongs to the DHHC palmitoyltransferase family. ERF2/ZDHHC9 subfamily. In terms of processing, autopalmitoylated.

It localises to the endoplasmic reticulum membrane. It carries out the reaction L-cysteinyl-[protein] + hexadecanoyl-CoA = S-hexadecanoyl-L-cysteinyl-[protein] + CoA. Palmitoyltransferase specific for Ras proteins. The chain is Palmitoyltransferase erf2 (erf2) from Aspergillus fumigatus (strain ATCC MYA-4609 / CBS 101355 / FGSC A1100 / Af293) (Neosartorya fumigata).